The following is a 653-amino-acid chain: 4-hydroxy-2,2'-bipyrrole-5-methanol synthase PigH (653 aa).

Residues 7–84 form the Carrier domain; sequence ETYETLKQSV…DALDGILQRE (78 aa). Ser-45 is modified (O-(pantetheine 4'-phosphoryl)serine). 354-355 serves as a coordination point for pyridoxal 5'-phosphate; it reads GY. His-379 is a binding site for substrate. 3 residues coordinate pyridoxal 5'-phosphate: Ser-426, His-454, and Thr-482. At Lys-485 the chain carries N6-(pyridoxal phosphate)lysine. The helical transmembrane segment at 512-532 threads the bilayer; it reads VFAATIPAPVAAGVIASIDVM.

Pyridoxal 5'-phosphate is required as a cofactor.

It localises to the membrane. It functions in the pathway antibiotic biosynthesis; prodigiosin biosynthesis. Functionally, involved in the biosynthesis of 4-methoxy-2,2'-bipyrrole-5-carbaldehyde (MBC), one of the terminal products involved in the biosynthesis of the red antibiotic prodigiosin (Pig). Carrier of the L-malonyl group (malonyl-S-PigH), which is decarboxylated by PigJ to yield a C2 carbanion acetyl-S-PigH. Then the pyrrolyl group of pyrrolyl-S-cysteinyl PigJ intermediate is captured by the C2 carbanion acetyl-S-PigH to yield the pyrrolyl-beta-ketoacyl-S-PigH. In the last step, PigH catalyzes the decarboxylative condensation between the pyrrolyl-beta-ketoacyl (pyrrolyl-beta-ketoacyl-S-PigH) and L-serine to yield 4-hydroxy-2,2'-bipyrrole-5-methanol (HBM). The chain is 4-hydroxy-2,2'-bipyrrole-5-methanol synthase PigH from Serratia sp. (strain ATCC 39006) (Prodigiosinella confusarubida).